A 549-amino-acid chain; its full sequence is Glucose-6-phosphate isomerase (549 aa).

The active-site Proton donor is E355. Residues H386 and K514 contribute to the active site.

It belongs to the GPI family.

It localises to the cytoplasm. It catalyses the reaction alpha-D-glucose 6-phosphate = beta-D-fructose 6-phosphate. Its pathway is carbohydrate biosynthesis; gluconeogenesis. The protein operates within carbohydrate degradation; glycolysis; D-glyceraldehyde 3-phosphate and glycerone phosphate from D-glucose: step 2/4. Catalyzes the reversible isomerization of glucose-6-phosphate to fructose-6-phosphate. This Enterobacter sp. (strain 638) protein is Glucose-6-phosphate isomerase.